An 856-amino-acid chain; its full sequence is Envelope glycoprotein gp160 (856 aa).

A signal peptide spans 1-32 (MRVKEKYQHLWRWGWRWGTMLLGMLMICSATE). Topologically, residues 33–684 (KLWVTVYYGV…ITNWLWYIKL (652 aa)) are extracellular. Cysteines 54 and 74 form a disulfide. Asn88, Asn136, Asn141, Asn156, Asn160, Asn186, Asn197, Asn230, Asn234, Asn241, Asn262, Asn276, Asn289, Asn295, Asn301, Asn332, Asn339, and Asn356 each carry an N-linked (GlcNAc...) asparagine; by host glycan. 5 cysteine pairs are disulfide-bonded: Cys119/Cys205, Cys126/Cys196, Cys131/Cys157, Cys218/Cys247, and Cys228/Cys239. Residues 131–156 (CTDLKNDTNTNSSSGRMIMEKGEIKN) form a V1 region. Residues 157-196 (CSFNISTSIRGKVQKEYAFFYKLDIIPIDNDTTSYTLTSC) form a V2 region. Positions 296 to 330 (CTRPNNNTRKSIRIQRGPGRAFVTIGKIGNMRQAH) are V3. A disulfide bridge connects residues Cys296 and Cys331. The interval 364-374 (SSGGDPEIVTH) is CD4-binding loop. 2 cysteine pairs are disulfide-bonded: Cys378–Cys445 and Cys385–Cys418. Positions 385–418 (CNSTQLFNSTWFNSTWSTKGSNNTEGSDTITLPC) are V4. 6 N-linked (GlcNAc...) asparagine; by host glycosylation sites follow: Asn386, Asn392, Asn397, Asn406, Asn448, and Asn463. V5 regions lie at residues 461–471 (SNNESEIFRPG) and 463–471 (NESEIFRPG). A fusion peptide region spans residues 512-532 (AVGIGALFLGFLGAAGSTMGA). An immunosuppression region spans residues 574–592 (KQLQARILAVERYLKDQQL). An intrachain disulfide couples Cys598 to Cys604. N-linked (GlcNAc...) asparagine; by host glycosylation is found at Asn611, Asn616, Asn625, and Asn637. A coiled-coil region spans residues 633 to 667 (REINNYTSLIHSLIEESQNQQEKNEQELLELDKWA). The interval 662 to 667 (ELDKWA) is involved in GalCer binding. Residues 662 to 683 (ELDKWASLWNWFNITNWLWYIK) are MPER; binding to GalCer. Asn674 carries N-linked (GlcNAc...) asparagine; by host glycosylation. A helical transmembrane segment spans residues 685–705 (FIMIVGGLVGLRIVFAVLSVV). Residues 706-856 (NRVRQGYSPL…IRQGLERILL (151 aa)) lie on the Cytoplasmic side of the membrane. The YXXL motif; contains endocytosis signal signature appears at 712–715 (YSPL). A disordered region spans residues 721-740 (LPIPRGPDRPEGIEEEGGER). A lipid anchor (S-palmitoyl cysteine; by host) is attached at Cys764. The Di-leucine internalization motif signature appears at 855–856 (LL).

It belongs to the HIV-1 env protein family. The mature envelope protein (Env) consists of a homotrimer of non-covalently associated gp120-gp41 heterodimers. The resulting complex protrudes from the virus surface as a spike. There seems to be as few as 10 spikes on the average virion. Interacts with host CD4, CCR5 and CXCR4. Gp120 also interacts with the C-type lectins CD209/DC-SIGN and CLEC4M/DC-SIGNR (collectively referred to as DC-SIGN(R)). Gp120 and gp41 interact with GalCer. Gp120 interacts with host ITGA4/ITGB7 complex; on CD4+ T-cells, this interaction results in rapid activation of integrin ITGAL/LFA-1, which facilitates efficient cell-to-cell spreading of HIV-1. Gp120 interacts with cell-associated heparan sulfate; this interaction increases virus infectivity on permissive cells and may be involved in infection of CD4- cells. In terms of assembly, the mature envelope protein (Env) consists of a homotrimer of non-covalently associated gp120-gp41 heterodimers. The resulting complex protrudes from the virus surface as a spike. There seems to be as few as 10 spikes on the average virion. In terms of processing, highly glycosylated by host. The high number of glycan on the protein is reffered to as 'glycan shield' because it contributes to hide protein sequence from adaptive immune system. Palmitoylation of the transmembrane protein and of Env polyprotein (prior to its proteolytic cleavage) is essential for their association with host cell membrane lipid rafts. Palmitoylation is therefore required for envelope trafficking to classical lipid rafts, but not for viral replication. Post-translationally, specific enzymatic cleavages in vivo yield mature proteins. Envelope glycoproteins are synthesized as an inactive precursor that is heavily N-glycosylated and processed likely by host cell furin in the Golgi to yield the mature SU and TM proteins. The cleavage site between SU and TM requires the minimal sequence [KR]-X-[KR]-R. About 2 of the 9 disulfide bonds of gp41 are reduced by P4HB/PDI, following binding to CD4 receptor.

The protein resides in the virion membrane. The protein localises to the host cell membrane. It localises to the host endosome membrane. Oligomerizes in the host endoplasmic reticulum into predominantly trimers. In a second time, gp160 transits in the host Golgi, where glycosylation is completed. The precursor is then proteolytically cleaved in the trans-Golgi and thereby activated by cellular furin or furin-like proteases to produce gp120 and gp41. In terms of biological role, attaches the virus to the host lymphoid cell by binding to the primary receptor CD4. This interaction induces a structural rearrangement creating a high affinity binding site for a chemokine coreceptor like CXCR4 and/or CCR5. Acts as a ligand for CD209/DC-SIGN and CLEC4M/DC-SIGNR, which are respectively found on dendritic cells (DCs), and on endothelial cells of liver sinusoids and lymph node sinuses. These interactions allow capture of viral particles at mucosal surfaces by these cells and subsequent transmission to permissive cells. HIV subverts the migration properties of dendritic cells to gain access to CD4+ T-cells in lymph nodes. Virus transmission to permissive T-cells occurs either in trans (without DCs infection, through viral capture and transmission), or in cis (following DCs productive infection, through the usual CD4-gp120 interaction), thereby inducing a robust infection. In trans infection, bound virions remain infectious over days and it is proposed that they are not degraded, but protected in non-lysosomal acidic organelles within the DCs close to the cell membrane thus contributing to the viral infectious potential during DCs' migration from the periphery to the lymphoid tissues. On arrival at lymphoid tissues, intact virions recycle back to DCs' cell surface allowing virus transmission to CD4+ T-cells. Its function is as follows. Acts as a class I viral fusion protein. Under the current model, the protein has at least 3 conformational states: pre-fusion native state, pre-hairpin intermediate state, and post-fusion hairpin state. During fusion of viral and target intracellular membranes, the coiled coil regions (heptad repeats) assume a trimer-of-hairpins structure, positioning the fusion peptide in close proximity to the C-terminal region of the ectodomain. The formation of this structure appears to drive apposition and subsequent fusion of viral and target cell membranes. Complete fusion occurs in host cell endosomes and is dynamin-dependent, however some lipid transfer might occur at the plasma membrane. The virus undergoes clathrin-dependent internalization long before endosomal fusion, thus minimizing the surface exposure of conserved viral epitopes during fusion and reducing the efficacy of inhibitors targeting these epitopes. Membranes fusion leads to delivery of the nucleocapsid into the cytoplasm. This chain is Envelope glycoprotein gp160, found in Homo sapiens (Human).